A 152-amino-acid chain; its full sequence is Snaclec anticoagulant protein subunit A (152 aa).

An N-terminal signal peptide occupies residues 1-23 (MGRFIFVSFGLLVVYLSLSGTAA). The C-type lectin domain maps to 24-152 (DCSSSWSSYE…EQRDPFVCEA (129 aa)). Disulfide bonds link C25–C36, C53–C150, and C125–C142. 3 residues coordinate Ca(2+): S64, E66, and E70. Residue E151 participates in Ca(2+) binding.

It belongs to the snaclec family. In terms of assembly, heterodimer of subunits A and B; disulfide-linked. As to expression, expressed by the venom gland.

Its subcellular location is the secreted. Its function is as follows. Anticoagulant protein which binds to the gamma-carboxyglutamic acid-domain regions of factors IX and factor X in the presence of calcium with a 1 to 1 stoichiometry. Also inhibits platelet aggregation by binding to platelet glycoprotein Ibalpha (GP1BA) and functioning as a blocker of vWF. Is devoid of hemorrhagic and lethal activities. Possesses antithrombotic and thrombolytic activities. Also hydrolyzes the Aalpha-chain of fibrinogen. Does not affect the Bbeta-chain and the gamma chain. The protein is Snaclec anticoagulant protein subunit A of Deinagkistrodon acutus (Hundred-pace snake).